The primary structure comprises 307 residues: Aspartate carbamoyltransferase catalytic subunit (307 aa).

The carbamoyl phosphate site is built by arginine 59 and threonine 60. L-aspartate is bound at residue lysine 87. Carbamoyl phosphate contacts are provided by arginine 109, histidine 137, and glutamine 140. Residues arginine 173 and arginine 223 each contribute to the L-aspartate site. Residues glycine 266 and proline 267 each contribute to the carbamoyl phosphate site.

This sequence belongs to the aspartate/ornithine carbamoyltransferase superfamily. ATCase family. As to quaternary structure, heterododecamer (2C3:3R2) of six catalytic PyrB chains organized as two trimers (C3), and six regulatory PyrI chains organized as three dimers (R2).

It carries out the reaction carbamoyl phosphate + L-aspartate = N-carbamoyl-L-aspartate + phosphate + H(+). It functions in the pathway pyrimidine metabolism; UMP biosynthesis via de novo pathway; (S)-dihydroorotate from bicarbonate: step 2/3. Its function is as follows. Catalyzes the condensation of carbamoyl phosphate and aspartate to form carbamoyl aspartate and inorganic phosphate, the committed step in the de novo pyrimidine nucleotide biosynthesis pathway. The polypeptide is Aspartate carbamoyltransferase catalytic subunit (Helicobacter pylori (strain G27)).